Consider the following 397-residue polypeptide: MNYAYPDEKGHYGIYGGRYVPETLMQSVLELEEAYKEAMEDEAFQKELNHYLNTYVGRETPLYFAENMTEYCGGAKIYLKREDLNHTGAHKINNTIGQALLAVRMGKKKVVAETGAGQHGVATATVCALLGLECVIFMGEEDVRRQKLNVFRMELLGAKVESVAAGSGTLKDAVNEALRYWVSHVHDTHYIMGSVLGPHPFPQIVRDFQSVIGNETKKQYEELEGKLPEAVVACIGGGSNAMGMFYPFVHDEEVALYGVEAAGKGVHTEKHAATLTKGSVGVLHGSMMYLLQNEEGQIQEAHSISAGLDYPGVGPEHSLLKDIGRVSYHSITDDEALEAFQLLTKKEGIIPALESSHAVAYALKLAPQMKEDEGLVICLSGRGDKDVESIKRYMEEV.

Lys91 carries the post-translational modification N6-(pyridoxal phosphate)lysine.

It belongs to the TrpB family. Tetramer of two alpha and two beta chains. It depends on pyridoxal 5'-phosphate as a cofactor.

It carries out the reaction (1S,2R)-1-C-(indol-3-yl)glycerol 3-phosphate + L-serine = D-glyceraldehyde 3-phosphate + L-tryptophan + H2O. The protein operates within amino-acid biosynthesis; L-tryptophan biosynthesis; L-tryptophan from chorismate: step 5/5. Functionally, the beta subunit is responsible for the synthesis of L-tryptophan from indole and L-serine. The protein is Tryptophan synthase beta chain of Bacillus thuringiensis (strain Al Hakam).